We begin with the raw amino-acid sequence, 227 residues long: UPF0688 protein C1orf174 homolog (227 aa).

Disordered regions lie at residues Met-1–Leu-122 and Ala-207–Ile-227. The segment covering Thr-47 to Val-63 has biased composition (basic and acidic residues). Polar residues-rich tracts occupy residues Ala-77–Arg-104 and Arg-113–Leu-122.

It belongs to the UPF0688 family.

Its subcellular location is the nucleus. The chain is UPF0688 protein C1orf174 homolog from Xenopus tropicalis (Western clawed frog).